Reading from the N-terminus, the 66-residue chain is MPKQKTHRGLAKRVKRTGGGGLKRGRAFTSHRFHGKTKKQRRQLRKASMVAKGDYKRIRQQLARMK.

2 stretches are compositionally biased toward basic residues: residues 1–16 and 23–45; these read MPKQ…RVKR and KRGR…RQLR. Positions 1–53 are disordered; the sequence is MPKQKTHRGLAKRVKRTGGGGLKRGRAFTSHRFHGKTKKQRRQLRKASMVAKG.

It belongs to the bacterial ribosomal protein bL35 family.

In Enterococcus faecalis (strain ATCC 700802 / V583), this protein is Large ribosomal subunit protein bL35.